The primary structure comprises 285 residues: 4-diphosphocytidyl-2-C-methyl-D-erythritol kinase (285 aa).

K12 is a catalytic residue. 95-105 serves as a coordination point for ATP; the sequence is PMGGGVGGGSS. D137 is an active-site residue.

It belongs to the GHMP kinase family. IspE subfamily.

The enzyme catalyses 4-CDP-2-C-methyl-D-erythritol + ATP = 4-CDP-2-C-methyl-D-erythritol 2-phosphate + ADP + H(+). It functions in the pathway isoprenoid biosynthesis; isopentenyl diphosphate biosynthesis via DXP pathway; isopentenyl diphosphate from 1-deoxy-D-xylulose 5-phosphate: step 3/6. In terms of biological role, catalyzes the phosphorylation of the position 2 hydroxy group of 4-diphosphocytidyl-2C-methyl-D-erythritol. The sequence is that of 4-diphosphocytidyl-2-C-methyl-D-erythritol kinase from Actinobacillus pleuropneumoniae serotype 3 (strain JL03).